The following is a 121-amino-acid chain: Large ribosomal subunit protein mL52 (121 aa).

The transit peptide at 1–22 (MAALGTWLSSVRRLHCSVVARA) directs the protein to the mitochondrion. Residues 98–109 (QEERKKEHDLKP) show a composition bias toward basic and acidic residues. The disordered stretch occupies residues 98–121 (QEERKKEHDLKPKGTLLRSPLPNQ).

The protein belongs to the mitochondrion-specific ribosomal protein mL52 family. As to quaternary structure, component of the mitochondrial ribosome large subunit (39S) which comprises a 16S rRNA and about 50 distinct proteins.

It localises to the mitochondrion. This Mus musculus (Mouse) protein is Large ribosomal subunit protein mL52 (Mrpl52).